We begin with the raw amino-acid sequence, 389 residues long: S-adenosylmethionine synthase (389 aa).

Residue histidine 15 participates in ATP binding. A Mg(2+)-binding site is contributed by aspartate 17. Position 43 (glutamate 43) interacts with K(+). L-methionine-binding residues include glutamate 56 and glutamine 99. A flexible loop region spans residues 99 to 109 (QSPDIAQGVNE). Residues 166 to 168 (DAK), 234 to 235 (RF), aspartate 243, 249 to 250 (RK), alanine 266, and lysine 270 each bind ATP. L-methionine is bound at residue aspartate 243. Lysine 274 is a binding site for L-methionine.

Belongs to the AdoMet synthase family. As to quaternary structure, homotetramer; dimer of dimers. Mg(2+) serves as cofactor. K(+) is required as a cofactor.

The protein resides in the cytoplasm. It catalyses the reaction L-methionine + ATP + H2O = S-adenosyl-L-methionine + phosphate + diphosphate. It participates in amino-acid biosynthesis; S-adenosyl-L-methionine biosynthesis; S-adenosyl-L-methionine from L-methionine: step 1/1. Catalyzes the formation of S-adenosylmethionine (AdoMet) from methionine and ATP. The overall synthetic reaction is composed of two sequential steps, AdoMet formation and the subsequent tripolyphosphate hydrolysis which occurs prior to release of AdoMet from the enzyme. In Neisseria meningitidis serogroup A / serotype 4A (strain DSM 15465 / Z2491), this protein is S-adenosylmethionine synthase.